The sequence spans 277 residues: Small ribosomal subunit protein uS5 (277 aa).

Residues 18 to 40 (AAGRPSWSWQRPGERARTPGRKA) form a disordered region. Residues 29–40 (PGERARTPGRKA) are compositionally biased toward basic and acidic residues. The 64-residue stretch at 87–150 (LKDEVLKIMP…ILAKLSIIPV (64 aa)) folds into the S5 DRBM domain.

The protein belongs to the universal ribosomal protein uS5 family. In terms of assembly, component of the small ribosomal subunit.

It localises to the cytoplasm. Its subcellular location is the nucleus. The protein localises to the nucleolus. Functionally, component of the ribosome, a large ribonucleoprotein complex responsible for the synthesis of proteins in the cell. The small ribosomal subunit (SSU) binds messenger RNAs (mRNAs) and translates the encoded message by selecting cognate aminoacyl-transfer RNA (tRNA) molecules. The large subunit (LSU) contains the ribosomal catalytic site termed the peptidyl transferase center (PTC), which catalyzes the formation of peptide bonds, thereby polymerizing the amino acids delivered by tRNAs into a polypeptide chain. The nascent polypeptides leave the ribosome through a tunnel in the LSU and interact with protein factors that function in enzymatic processing, targeting, and the membrane insertion of nascent chains at the exit of the ribosomal tunnel. Plays a role in the assembly and function of the 40S ribosomal subunit. Mutations in this protein affects the control of translational fidelity. Involved in nucleolar processing of pre-18S ribosomal RNA and ribosome assembly. The polypeptide is Small ribosomal subunit protein uS5 (rps2) (Ictalurus punctatus (Channel catfish)).